Consider the following 588-residue polypeptide: Solute carrier family 2, facilitated glucose transporter member 12 (588 aa).

The Cytoplasmic segment spans residues Met1–Thr28. The helical transmembrane segment at Gly29–Gly49 threads the bilayer. The Extracellular segment spans residues Tyr50–Glu74. The chain crosses the membrane as a helical span at residues Ile75 to Ile95. Over Asp96–Thr103 the chain is Cytoplasmic. Residues Ile104–Tyr124 form a helical membrane-spanning segment. Over Gly125 to Arg131 the chain is Extracellular. The helical transmembrane segment at Ile132–Leu152 threads the bilayer. Residues Ser153 to Arg158 are Cytoplasmic-facing. Residues Gly159–Cys179 traverse the membrane as a helical segment. Residues Asn180–Lys191 are Extracellular-facing. The chain crosses the membrane as a helical span at residues Tyr192–Pro212. Over Arg213 to Arg272 the chain is Cytoplasmic. A helical membrane pass occupies residues Leu273–Phe293. Over Tyr294–Ser311 the chain is Extracellular. The helical transmembrane segment at Leu312–Val332 threads the bilayer. Residues Asp333–Thr339 lie on the Cytoplasmic side of the membrane. A helical transmembrane segment spans residues Phe340–Leu360. The Extracellular segment spans residues Gln361–Leu459. Residues Asn377, Asn395, and Asn419 are each glycosylated (N-linked (GlcNAc...) asparagine). A helical transmembrane segment spans residues Ser460–Val480. The Cytoplasmic segment spans residues Gln481–Arg492. The helical transmembrane segment at Ala493–Leu513 threads the bilayer. At Thr514–Pro522 the chain is on the extracellular side. A helical membrane pass occupies residues Trp523–Val543. At Pro544–Ala588 the chain is on the cytoplasmic side.

The protein belongs to the major facilitator superfamily. Sugar transporter (TC 2.A.1.1) family. Glucose transporter subfamily.

Its subcellular location is the cell membrane. The protein resides in the endomembrane system. It localises to the cytoplasm. The protein localises to the perinuclear region. The enzyme catalyses D-glucose(out) = D-glucose(in). Functionally, insulin-regulated facilitative glucose transporter. The protein is Solute carrier family 2, facilitated glucose transporter member 12 of Xenopus laevis (African clawed frog).